The primary structure comprises 495 residues: Cysteine--tRNA ligase (495 aa).

A Zn(2+)-binding site is contributed by cysteine 35. Positions 37–47 match the 'HIGH' region motif; it reads PTVYSNVHLGN. The Zn(2+) site is built by cysteine 230, histidine 255, and glutamate 259. Positions 287-291 match the 'KMSKS' region motif; that stretch reads KMSKS. Position 290 (lysine 290) interacts with ATP.

The protein belongs to the class-I aminoacyl-tRNA synthetase family. In terms of assembly, monomer. Zn(2+) serves as cofactor.

The protein resides in the cytoplasm. The catalysed reaction is tRNA(Cys) + L-cysteine + ATP = L-cysteinyl-tRNA(Cys) + AMP + diphosphate. The protein is Cysteine--tRNA ligase of Flavobacterium psychrophilum (strain ATCC 49511 / DSM 21280 / CIP 103535 / JIP02/86).